A 65-amino-acid polypeptide reads, in one-letter code: Small ribosomal subunit protein bS21 (65 aa).

It belongs to the bacterial ribosomal protein bS21 family.

This is Small ribosomal subunit protein bS21 from Thermodesulfovibrio yellowstonii (strain ATCC 51303 / DSM 11347 / YP87).